Here is a 113-residue protein sequence, read N- to C-terminus: Cell division protein FtsB (113 aa).

Residues 1–3 (MRL) lie on the Cytoplasmic side of the membrane. Residues 4–21 (ISLLLFVLLLAIQYPLWL) form a helical membrane-spanning segment. The Periplasmic segment spans residues 22-113 (GKGGWLRVWD…PNSVAGRGGH (92 aa)). Residues 34 to 64 (RQVNEQTVHNQALKLRNAKLEGEVKDLQDGT) are a coiled coil. The segment at 93–113 (KVSATPPLPPPPNSVAGRGGH) is disordered.

The protein belongs to the FtsB family. In terms of assembly, part of a complex composed of FtsB, FtsL and FtsQ.

It is found in the cell inner membrane. Its function is as follows. Essential cell division protein. May link together the upstream cell division proteins, which are predominantly cytoplasmic, with the downstream cell division proteins, which are predominantly periplasmic. This is Cell division protein FtsB from Cupriavidus metallidurans (strain ATCC 43123 / DSM 2839 / NBRC 102507 / CH34) (Ralstonia metallidurans).